The following is a 212-amino-acid chain: Inner membrane-spanning protein YciB (212 aa).

The next 5 membrane-spanning stretches (helical) occupy residues 49–69 (APVL…VLYL), 78–98 (TMLW…IWFH), 105–125 (WKPS…PIVA), 150–170 (LAWA…AYNF), and 178–198 (FKAF…GLYM).

The protein belongs to the YciB family.

Its subcellular location is the cell inner membrane. Plays a role in cell envelope biogenesis, maintenance of cell envelope integrity and membrane homeostasis. This chain is Inner membrane-spanning protein YciB, found in Leptothrix cholodnii (strain ATCC 51168 / LMG 8142 / SP-6) (Leptothrix discophora (strain SP-6)).